The sequence spans 148 residues: uncharacterized protein (148 aa).

Residues 8-148 form the N-acetyltransferase domain; it reads QVMQEPELKI…DGFLTLILRN (141 aa).

Belongs to the acetyltransferase family.

This is an uncharacterized protein from Bacillus subtilis (strain 168).